A 414-amino-acid polypeptide reads, in one-letter code: Aspartic protease-like protein pynH (414 aa).

A signal peptide spans 1–19 (MFPCSRIWSLLVAAATASA). One can recognise a Peptidase A1 domain in the interval 43 to 410 (FLTDIALGTP…DFEKLQVGIA (368 aa)). Residues N93, N102, N140, N151, N173, N202, N221, N258, N272, N335, and N366 are each glycosylated (N-linked (GlcNAc...) asparagine). An intrachain disulfide couples C333 to C371.

This sequence belongs to the peptidase A1 family.

It participates in secondary metabolite biosynthesis. Functionally, aspartic protease-like protein; part of the gene cluster that mediates the biosynthesis of pyranonigrins, a family of antioxidative compounds. The first step of pyranonigrins biosynthesis is performed by the hybrid PKS-NRPS synthetase that condenses 6 malonyl-CoA units to an acetyl starter unit, to form a 1,3,5-trioxotetradecane-6,8-dienyl-ACP. The enoyl reductase (ER) domain of pynA is likely to be functional during the first two rounds of polyketide chain extension, to generate the saturated C-C bonds of the alkyl side chain. PynA subsequently forms the amide bond between the acyl chain and L-serine. Although pynA has a terminal reductase domain, it appears to require the thioesterase pynI for the release of the straight-chain intermediate from pynA via the formation of a tetramic acid pyranonigrin J. The methyltransferase pynC then coverts pyranonigrin J to pyranonigrin I via N-methylation. The FAD-dependent monooxygenase pynG catalyzes an epoxidation-mediated cyclization to form the dihydro-gamma-pyrone moiety, followed by pynD-catalyzed oxidation of the alcohol to the ketone and enolization to yield the characteristic tetramic acid-fused gamma-pyrone core of pyranonigrin H. Pyranonigrin H is substrate of pynH for dehydration-mediated exo-methylene formation from the serine side chain to produce pyranonigrin E, before the oxidase pynE reduces the exo-methylene of pyranonigrin E into a pendant methyl to form pyranonigrin G. The FAD-linked oxidoreductase pynB performs the reverse reaction and converts pyranonigrin G back to pyranonigrin E. The polypeptide is Aspartic protease-like protein pynH (Aspergillus niger (strain ATCC MYA-4892 / CBS 513.88 / FGSC A1513)).